The sequence spans 248 residues: Pyridoxal 4-dehydrogenase (248 aa).

Leucine 11–isoleucine 35 is a binding site for NAD(+). A substrate-binding site is contributed by serine 141. Tyrosine 154 functions as the Proton acceptor in the catalytic mechanism.

It belongs to the short-chain dehydrogenases/reductases (SDR) family. Homotetramer.

It carries out the reaction pyridoxal + NAD(+) = 4-pyridoxolactone + NADH + H(+). It functions in the pathway cofactor degradation; B6 vitamer degradation; 4-pyridoxate from pyridoxal: step 1/2. Involved in the degradation of pyridoxine or pyridoxamine (free, phosphate-unbound, forms of vitamin B6). Oxidizes pyridoxal to 4-pyridoxolactone, but does not have activity toward pyridoxal 5'-phosphate, pyridoxine, pyridoxamine, pyridoxamine 5'-phosphate, 4-phthalaldehyde, 2-nitrobenzaldehyde, pyridine, formaldehyde, 2-carboxybenzaldehyde or sugars. This is Pyridoxal 4-dehydrogenase from Mesorhizobium japonicum (strain LMG 29417 / CECT 9101 / MAFF 303099) (Mesorhizobium loti (strain MAFF 303099)).